The chain runs to 328 residues: Protein chibby homolog 2 (328 aa).

The tract at residues 180-231 is disordered; that stretch reads NKGASSVQKDTENTTAAGEGSLGPTCQEEHDAKEESTTPTQNDTKIAPSTED. Residues 182–195 show a composition bias toward polar residues; the sequence is GASSVQKDTENTTA. A compositionally biased stretch (basic and acidic residues) spans 206 to 215; sequence QEEHDAKEES. A coiled-coil region spans residues 259-307; it reads RESLHALQDESKFFQEEYKKLKLQLNNVKNTVSDITTQMEMLEKELIAI.

This sequence belongs to the chibby family. SPERT subfamily.

This chain is Protein chibby homolog 2 (CBY2), found in Gallus gallus (Chicken).